The sequence spans 446 residues: Xanthone prenyltransferase A (446 aa).

Dimethylallyl diphosphate-binding residues include Arg113, Lys199, Tyr201, Arg263, Lys265, Tyr267, Tyr369, and Tyr440.

Belongs to the tryptophan dimethylallyltransferase family.

It participates in secondary metabolite biosynthesis. Xanthone prenyltransferase involved in the conversion of monodictyphenone to the prenyl xanthones such as emericellin, shamixanthone and epishamixanthone. Monodictyphenone is first converted to variecoxanthone A via a paeciloxanthone intermediate by the consecutive actions of the FAD-dependent monooxygenase mdpD and the xanthone prenyltransferase xptB. XptB catalyzes regular O-prenylation at the hydroxy group of C-7 of the xanthone ring. Variecoxanthone A is further prenylated to emericellin by xptA before being reduced to shamixanthone and epishamixanthone by the dehydrogenase xptC. The chain is Xanthone prenyltransferase A from Emericella nidulans (strain FGSC A4 / ATCC 38163 / CBS 112.46 / NRRL 194 / M139) (Aspergillus nidulans).